Reading from the N-terminus, the 613-residue chain is MAEGVFPGAIGIDLGTTYSCVATYENSVEIIANEQGNRVTPSFVAFTPEERLIGDAAKNQAALNPKNTVFDAKRLIGRRFDEESVQSDMKTWPFKVIDSNGAPLIEVEYLGETKTFSPQEISSMVLTKMKEIAEAKIGKKVEKAVVTVPAYFNDAQRQATKDAGAIAGLNVLRIINEPTAAAIAYGVGAGNSEKERHVLIFDLGGGTFDVSLLHIAGGVYTVKSTSGNTHLGGQDFDTNLLEHFKTEFKKKTGADISGDARALRRLRTAAERAKRTLSSVAQTTVEVDSLFDGEDFEATITRARFEDINAALFKSTLEPVEQVLKDAKISKSQIDEVVLVGGSTRIPKVQKLLSDFFDGKQLEKSINPDEAVAYGAAVQGAILTGQSTSDETKDLLLLDVAPLSLGVGMAGDVFGVVVPRNTTVPTIKRRTFTTVADHQTTVTFPVYQGERVNCKENTLLGEFDLKGVPPMPAGEPVLEAIFEVDANGILKVTAVEKSTGKSANITISNAIGRLSSEEIEQMVNQAEEFKAADEAFAKKHEARQRLESYISSVQQTVTDPVLSAKIKRNAKAKVEAALADAFSTLQIEDASADDLRKAEVGLKRAVTKAMSTR.

The segment at 1–391 (MAEGVFPGAI…ILTGQSTSDE (391 aa)) is nucleotide binding domain (NBD). ATP-binding positions include 16–18 (TTY), lysine 73, 205–207 (GGT), 271–278 (ERAKRTLS), and glycine 342. An inter-domain linker region spans residues 392–402 (TKDLLLLDVAP). Positions 403–613 (LSLGVGMAGD…RAVTKAMSTR (211 aa)) are substrate binding domain (SBD). Residues 516-612 (SEEIEQMVNQ…KRAVTKAMST (97 aa)) form a lid domain (SBDalpha) region. The Nuclear export signal signature appears at 574–582 (VEAALADAF).

This sequence belongs to the heat shock protein 70 family. Ssb-type Hsp70 subfamily. In terms of assembly, binds to ribosomes. Binds close to the ribosomal tunnel exit via contacts with both ribosomal proteins and rRNA. Directly interacts with nascent polypeptides. This interaction is dependent on the ribosome-associated complex (RAC). Interacts with SSE1. Interacts with FES1.

It localises to the cytoplasm. The catalysed reaction is ATP + H2O = ADP + phosphate + H(+). Ribosome-bound, Hsp70-type chaperone that assists in the cotranslational folding of newly synthesized proteins in the cytosol. Stimulates folding by interacting with nascent chains, binding to short, largely hydrophobic sequences exposed by unfolded proteins, thereby stabilizing longer, more slowly translated, and aggregation-prone nascent polypeptides and domains that cannot fold stably until fully synthesized. The Hsp70-protein substrate interaction depends on ATP-binding and on allosteric regulation between the NBD and the SBD. The ATP-bound state is characterized by a fast exchange rate of substrate (low affinity state), while in the ADP-bound state exchange is much slower (high affinity state). During the Hsp70 cycle, the chaperone switches between the ATP-bound state (open conformation) and the ADP-bound state (closed conformation) by major conformational rearrangements involving mainly the lid domain. Ssb cooperates with a specific Hsp40/Hsp70 co-chaperone termed the ribosome-associated complex (RAC), which stimulates the ATPase activity of the ribosome-associated pool of Ssbs and switches it to the high affinity substrate binding state. Hsp110 chaperone SSE1 and FES1 act as nucleotide exchange factors that cause substrate release. The chain is Ribosome-associated molecular chaperone SSB1 (SSB1) from Kluyveromyces marxianus (Yeast).